Consider the following 513-residue polypeptide: Microtubule-associated protein 70-5 (513 aa).

Disordered stretches follow at residues 1–20 (MTAA…SQLK), 60–81 (KLGA…LEEE), 347–367 (FLTS…GSVT), and 393–413 (ANGL…EDGN). Residues 9-18 (VSDTSSLQSQ) are compositionally biased toward polar residues. Positions 10 to 322 (SDTSSLQSQL…LKLRLKTIED (313 aa)) form a coiled coil. Basic and acidic residues predominate over residues 60 to 80 (KLGATENQVDQKELERKKLEE). A required for targeting to microtubules region spans residues 190–400 (FLEKINRQKV…ITANGLTDQH (211 aa)). Residues 426-501 (DRLQKEVIAL…EESKLCRKAK (76 aa)) adopt a coiled-coil conformation.

Belongs to the MAP70 family. As to quaternary structure, interacts with MAP70.1 and itself.

It is found in the cytoplasm. Its subcellular location is the cytoskeleton. Plant-specific protein that interact with microtubules and regulates microtubule dynamics. May play a role in anisotropic cell expansion and organ growth. In association with MAP70.1, is essential for the normal banding pattern of secondary cell wall and for the proper development of xylem tracheary elements and wood formation. This Arabidopsis thaliana (Mouse-ear cress) protein is Microtubule-associated protein 70-5 (MAP70.5).